We begin with the raw amino-acid sequence, 409 residues long: Putative competence-damage inducible protein (409 aa).

It belongs to the CinA family.

This is Putative competence-damage inducible protein from Clostridium botulinum (strain ATCC 19397 / Type A).